Reading from the N-terminus, the 359-residue chain is S-adenosylmethionine:tRNA ribosyltransferase-isomerase (359 aa).

Belongs to the QueA family. Monomer.

It is found in the cytoplasm. The catalysed reaction is 7-aminomethyl-7-carbaguanosine(34) in tRNA + S-adenosyl-L-methionine = epoxyqueuosine(34) in tRNA + adenine + L-methionine + 2 H(+). Its pathway is tRNA modification; tRNA-queuosine biosynthesis. Transfers and isomerizes the ribose moiety from AdoMet to the 7-aminomethyl group of 7-deazaguanine (preQ1-tRNA) to give epoxyqueuosine (oQ-tRNA). The polypeptide is S-adenosylmethionine:tRNA ribosyltransferase-isomerase (Alcanivorax borkumensis (strain ATCC 700651 / DSM 11573 / NCIMB 13689 / SK2)).